A 157-amino-acid chain; its full sequence is MTPRQRRLGLLAAALACCGVAAALVLNAFRANLVFFFSPSQVAAQEAPVARSFRLGGLVASGSIRREGDGMTVRFVVTDTARQVPVQYRGLLPDLFREGKGVVARGQLRADGTFVATEVLAKHDENYMPPEAAAALKQAGQANPGMAGAMAAQELRR.

Topologically, residues 1 to 7 are cytoplasmic; that stretch reads MTPRQRR. Residues 8–28 form a helical; Signal-anchor for type II membrane protein membrane-spanning segment; that stretch reads LGLLAAALACCGVAAALVLNA. Residues 29 to 157 are Periplasmic-facing; sequence FRANLVFFFS…GAMAAQELRR (129 aa). Residues His123 and Tyr127 each coordinate heme.

It belongs to the CcmE/CycJ family.

It is found in the cell inner membrane. Its function is as follows. Heme chaperone required for the biogenesis of c-type cytochromes. Transiently binds heme delivered by CcmC and transfers the heme to apo-cytochromes in a process facilitated by CcmF and CcmH. This chain is Cytochrome c-type biogenesis protein CcmE, found in Cupriavidus taiwanensis (strain DSM 17343 / BCRC 17206 / CCUG 44338 / CIP 107171 / LMG 19424 / R1) (Ralstonia taiwanensis (strain LMG 19424)).